The following is a 35-amino-acid chain: Tamulustoxin-2 (35 aa).

3 cysteine pairs are disulfide-bonded: Cys2–Cys22, Cys7–Cys31, and Cys11–Cys33.

This sequence belongs to the short scorpion toxin superfamily. Potassium channel inhibitor family. As to expression, expressed by the venom gland.

The protein localises to the secreted. Its function is as follows. Blocks Kv1.6/KCNA6 potassium channels. This is Tamulustoxin-2 from Hottentotta tamulus (Eastern Indian scorpion).